We begin with the raw amino-acid sequence, 181 residues long: SAGA-associated factor 11 (181 aa).

The SGF11-type zinc finger occupies 93 to 114 (FNCMNCGRQIVAGRFAPHLEKC). The span at 116-125 (GKGRKARAKT) shows a compositional bias: basic residues. Residues 116–181 (GKGRKARAKT…FTVRENVKGD (66 aa)) form a disordered region. Over residues 126–153 (TRSTTAAQNRNARRSPNPRYSPYPNSAS) the composition is skewed to low complexity.

Belongs to the SGF11 family. As to quaternary structure, component of a deubiquitination module (DUB module) formed by ENY2, SGF11, and UBP22 in Arabidopsis. Interacts directly with ENY2 and UBP22. Interacts with DDA1. Ubiquitinated in DET1-dependent manner. Ubiquitination probably leads to its subsequent proteasomal degradation.

It is found in the nucleus. It localises to the nucleoplasm. Component of a deubiquitination module (DUB module) that specifically deubiquinates monoubiquinated histone H2B (H2Bub). Does not seem to be a component of the TREX-2 complex. Seems to act independently of the SAGA multiprotein complex. The DUB module is responsible for the major H2Bub deubiquitinase activity in Arabidopsis. This Arabidopsis thaliana (Mouse-ear cress) protein is SAGA-associated factor 11.